The chain runs to 159 residues: UPF0756 membrane protein PTH_1668 (159 aa).

Helical transmembrane passes span 15 to 37 (ILITLLFLGLFGRSNLVVSSSCI), 61 to 81 (LGLVLLMLHILSPVATEKLTI), 117 to 137 (PEIIFGLTVGTVLGILFLRGT), and 138 to 158 (PCGPVMAAAVTAVFLQIASLF).

It belongs to the UPF0756 family.

It localises to the cell membrane. The sequence is that of UPF0756 membrane protein PTH_1668 from Pelotomaculum thermopropionicum (strain DSM 13744 / JCM 10971 / SI).